The sequence spans 36 residues: Dermonecrotic toxin LgSicTox-beta-LOXN2 (36 aa).

Belongs to the arthropod phospholipase D family. Class II subfamily. Mg(2+) is required as a cofactor. Post-translationally, contains 2 disulfide bonds. Expressed by the venom gland.

It is found in the secreted. It catalyses the reaction an N-(acyl)-sphingosylphosphocholine = an N-(acyl)-sphingosyl-1,3-cyclic phosphate + choline. The enzyme catalyses an N-(acyl)-sphingosylphosphoethanolamine = an N-(acyl)-sphingosyl-1,3-cyclic phosphate + ethanolamine. It carries out the reaction a 1-acyl-sn-glycero-3-phosphocholine = a 1-acyl-sn-glycero-2,3-cyclic phosphate + choline. The catalysed reaction is a 1-acyl-sn-glycero-3-phosphoethanolamine = a 1-acyl-sn-glycero-2,3-cyclic phosphate + ethanolamine. Its function is as follows. Dermonecrotic toxins cleave the phosphodiester linkage between the phosphate and headgroup of certain phospholipids (sphingolipid and lysolipid substrates), forming an alcohol (often choline) and a cyclic phosphate. This toxin acts on sphingomyelin (SM). It may also act on ceramide phosphoethanolamine (CPE), lysophosphatidylcholine (LPC) and lysophosphatidylethanolamine (LPE), but not on lysophosphatidylserine (LPS), and lysophosphatidylglycerol (LPG). It acts by transphosphatidylation, releasing exclusively cyclic phosphate products as second products. Induces dermonecrosis, hemolysis, increased vascular permeability, edema, inflammatory response, and platelet aggregation. The sequence is that of Dermonecrotic toxin LgSicTox-beta-LOXN2 from Loxosceles gaucho (Spider).